A 251-amino-acid polypeptide reads, in one-letter code: Probable transcriptional regulatory protein RSal33209_2002 (251 aa).

The protein belongs to the TACO1 family.

It localises to the cytoplasm. The chain is Probable transcriptional regulatory protein RSal33209_2002 from Renibacterium salmoninarum (strain ATCC 33209 / DSM 20767 / JCM 11484 / NBRC 15589 / NCIMB 2235).